Here is a 945-residue protein sequence, read N- to C-terminus: MSNKKADSKPQAKYPVNLLDTPFPMRGDLPKREPQWVEDWEARGVYEKIRAASQGRPKFILHDGPPYANGDIHLGHAVNKILKDMVVKSRNMAGFDAPYVPGWDCHGMPIEIQIEKQFGKSLPAAEVMAKARAYATEQIEKQKVGFKRLGVLGEWGNPYKTMNFQNEAEEIRALGKIIEKGYVYRGLKPVNWCFDCGSALAEAEVEYKDRTDPTIDVLFAFAEPEKTAHAFGLAELPRAEGGIVIWTTTPWTIPANQALNLHPEIVYALVDTERGLLVMAEERVEACMKDFGLTGRVIARTPGEKLANLRFHHPLAAAHPGYKRTSPVYLGDYVTTDTGTGVVHSSPAYGVEDFTSCKAHGMTDSDIINPVMGDGRYIESLPLFGGLTIWDANPKIVDALKAAGSLLRNERYAHSYMHCWRHKTPIIYRATSQWFAGMDTQPADGGKTLRETALDAVDATAFYPSWGKQRLHAMIANRPDWTLSRQRQWGVPMAFFVHKETGELHPRTLELLEEVAKRVERQGIEAWQTLDARELIGDDANLYEKNRDTLDVWFDSGTTHWHVLRGSHKDQLQFPADLYLEGSDQHRGWFHSSLLTASMLDGRAPYKGLLTHGFTVDGEGRKMSKSLGNGIDPHEVANRLGAEIIRLWIASTDYSGELAISEEILKRVTEGYRRIRNTLRFLLANLSDFDYAKDALPAGQWLEIDRYAVAFAAQLQAELLAHYEKYEFHPVVAKLQTFCSEDLGGFYLDVLKDRLYTSAPASPARRSAQTALYHVTQGLLRVLAPFLSFTAEEAWRVFQPQSDTIFTETYYAYPEIAGAEALIAKWTLLRDVRGDVTKALEEARTANRIGSSLQAQVEVRASGARYDALASLGDDLKFVLITSAATVVKVDAQGDESVDVAASTYPKCERCWHYREDVGAHADHPTLCGRCFSNLFENGETRSAA.

The short motif at 66–76 (PYANGDIHLGH) is the 'HIGH' region element. E581 contacts L-isoleucyl-5'-AMP. Residues 622 to 626 (KMSKS) carry the 'KMSKS' region motif. K625 is an ATP binding site. 4 residues coordinate Zn(2+): C908, C911, C928, and C931.

It belongs to the class-I aminoacyl-tRNA synthetase family. IleS type 1 subfamily. In terms of assembly, monomer. The cofactor is Zn(2+).

It localises to the cytoplasm. The catalysed reaction is tRNA(Ile) + L-isoleucine + ATP = L-isoleucyl-tRNA(Ile) + AMP + diphosphate. Its function is as follows. Catalyzes the attachment of isoleucine to tRNA(Ile). As IleRS can inadvertently accommodate and process structurally similar amino acids such as valine, to avoid such errors it has two additional distinct tRNA(Ile)-dependent editing activities. One activity is designated as 'pretransfer' editing and involves the hydrolysis of activated Val-AMP. The other activity is designated 'posttransfer' editing and involves deacylation of mischarged Val-tRNA(Ile). The protein is Isoleucine--tRNA ligase 1 of Burkholderia pseudomallei (strain K96243).